Reading from the N-terminus, the 477-residue chain is Methylenetetrahydrofolate--tRNA-(uracil-5-)-methyltransferase TrmFO (477 aa).

15-20 (GAGLAG) is a binding site for FAD.

It belongs to the MnmG family. TrmFO subfamily. It depends on FAD as a cofactor.

It localises to the cytoplasm. It carries out the reaction uridine(54) in tRNA + (6R)-5,10-methylene-5,6,7,8-tetrahydrofolate + NADH + H(+) = 5-methyluridine(54) in tRNA + (6S)-5,6,7,8-tetrahydrofolate + NAD(+). The enzyme catalyses uridine(54) in tRNA + (6R)-5,10-methylene-5,6,7,8-tetrahydrofolate + NADPH + H(+) = 5-methyluridine(54) in tRNA + (6S)-5,6,7,8-tetrahydrofolate + NADP(+). Catalyzes the folate-dependent formation of 5-methyl-uridine at position 54 (M-5-U54) in all tRNAs. In Nitrobacter hamburgensis (strain DSM 10229 / NCIMB 13809 / X14), this protein is Methylenetetrahydrofolate--tRNA-(uracil-5-)-methyltransferase TrmFO.